The primary structure comprises 864 residues: Arf-GAP with GTPase, ANK repeat and PH domain-containing protein 1 (864 aa).

The tract at residues 66-276 (SRSVPELKVG…QTSNGGGSLS (211 aa)) is small GTPase-like. In terms of domain architecture, GLD spans 67-241 (RSVPELKVGI…TRKKQQLSIG (175 aa)). GTP-binding positions include 78 to 85 (GNLASGKS), 122 to 126 (IRDEG), and 178 to 181 (TQDA). Disordered stretches follow at residues 266 to 343 (SQTS…IGSG), 405 to 455 (VPGK…QMAS), and 499 to 549 (TGLG…LSST). Residues 275-289 (LSDYSSSVPSTPSTS) show a composition bias toward low complexity. A compositionally biased stretch (basic and acidic residues) spans 322–337 (KGSDPDKDKKGLESRA). Positions 346–591 (IPIKQGMLLK…WVQAIESQIL (246 aa)) constitute a PH domain. The span at 413–428 (ATSSCAPVASPKTNGL) shows a compositional bias: polar residues. The segment covering 507–517 (SSPSISSTTSP) has biased composition (low complexity). Positions 527-537 (ANRKKHRRKKS) are enriched in basic residues. Over residues 538–549 (TSNFKVDGLSST) the composition is skewed to polar residues. The 121-residue stretch at 612–732 (ALALQSIRNL…LFLSPLPCRD (121 aa)) folds into the Arf-GAP domain. The segment at 627–650 (CVDCDAQSPDWASLNLGALMCIEC) adopts a C4-type zinc-finger fold. ANK repeat units lie at residues 771-800 (DRRT…DVMA) and 804-833 (HGNT…PDEQ). The span at 845–854 (KNNRNNNSNA) shows a compositional bias: low complexity. Residues 845–864 (KNNRNNNSNAGGSGLMPTLI) form a disordered region.

The protein belongs to the centaurin gamma-like family. Homodimer. Interacts with several subunits of the AP-3 protein complex.

It localises to the cytoplasm. Functionally, GTPase-activating protein. Directly and specifically regulates the adapter protein 3 (AP-3)-dependent trafficking of proteins in the endosomal-lysosomal system. In Xenopus laevis (African clawed frog), this protein is Arf-GAP with GTPase, ANK repeat and PH domain-containing protein 1 (agap1).